Consider the following 504-residue polypeptide: Anaerobic nitric oxide reductase transcription regulator NorR (504 aa).

4-aspartylphosphate is present on Asp-57. Positions 187–416 (MIGLSPGMTQ…LEHAIHRAVV (230 aa)) constitute a Sigma-54 factor interaction domain. Residues 215-222 (GETGTGKE) and 278-287 (ADNGTLFLDE) contribute to the ATP site. A DNA-binding region (H-T-H motif) is located at residues 479–498 (WAACARMLETDVANLHRLAK).

It functions in the pathway nitrogen metabolism; nitric oxide reduction. Required for the expression of anaerobic nitric oxide (NO) reductase, acts as a transcriptional activator for at least the norVW operon. Activation also requires sigma-54. The protein is Anaerobic nitric oxide reductase transcription regulator NorR of Escherichia coli O9:H4 (strain HS).